Reading from the N-terminus, the 1008-residue chain is Probable pre-mRNA-splicing factor ATP-dependent RNA helicase mog-4 (1008 aa).

Disordered regions lie at residues 104 to 146 (SSTK…SESD) and 169 to 202 (NKKE…REES). Residues 127–137 (KASKPGKSVKP) are compositionally biased toward low complexity. Positions 374-538 (IEAVKEHQVL…FDDAPIFRIP (165 aa)) constitute a Helicase ATP-binding domain. 387–394 (GETGSGKT) is an ATP binding site. The short motif at 485–488 (DEAH) is the DEAH box element. A Helicase C-terminal domain is found at 563–737 (TIMQIHLTQP…NVVLMLKSLG (175 aa)). Residues 988 to 1008 (EDATNKKMPKNKGKSGKDLER) form a disordered region.

It belongs to the DEAD box helicase family. DEAH subfamily. DDX16/PRP8 sub-subfamily. In terms of assembly, interacts with mep-1 and smn-1.

Its subcellular location is the nucleus. The enzyme catalyses ATP + H2O = ADP + phosphate + H(+). In terms of biological role, ATP-binding RNA helicase involved in pre-mRNA splicing. Operates during embryogenesis. In Caenorhabditis elegans, this protein is Probable pre-mRNA-splicing factor ATP-dependent RNA helicase mog-4 (mog-4).